Reading from the N-terminus, the 281-residue chain is Protein phosphatase 2C homolog 1 (281 aa).

In terms of domain architecture, PPM-type phosphatase spans 20–281 (RVGVAENKNS…DNVTVMVVFL (262 aa)). D58, G59, D233, and D272 together coordinate Mn(2+).

It belongs to the PP2C family. In terms of assembly, interacts with NBP2 and PBS2. It depends on Mg(2+) as a cofactor. Mn(2+) serves as cofactor.

Its subcellular location is the peroxisome. It catalyses the reaction O-phospho-L-seryl-[protein] + H2O = L-seryl-[protein] + phosphate. The enzyme catalyses O-phospho-L-threonyl-[protein] + H2O = L-threonyl-[protein] + phosphate. In terms of biological role, serine and threonine phosphatase. Involved in tRNA splicing and cell separation. This Saccharomyces cerevisiae (strain ATCC 204508 / S288c) (Baker's yeast) protein is Protein phosphatase 2C homolog 1 (PTC1).